A 284-amino-acid chain; its full sequence is Chaperone protein dnaJ 6 (284 aa).

3 disordered regions span residues 1-30 (MGRK…ETSL), 196-221 (NKIS…AKDS), and 252-284 (GGDA…SRGK). The Nuclear localization signal motif lies at 3–6 (RKKK). The region spanning 29–94 (SLYEVLGVER…EKRAVYDQTG (66 aa)) is the J domain. A Nuclear localization signal motif is present at residues 209–215 (RKRKKKK). Residues 255 to 265 (AEAEPTEEEFE) show a composition bias toward acidic residues. Residues 266 to 275 (AAQRRIESKR) are compositionally biased toward basic and acidic residues.

The protein belongs to the DnaJ family. C/III subfamily. Highly expressed in leaves, flowers and siliques, and to lower extent in roots.

It is found in the nucleus. In terms of biological role, plays a continuous role in plant development probably in the structural organization of compartments. The sequence is that of Chaperone protein dnaJ 6 (ATJ6) from Arabidopsis thaliana (Mouse-ear cress).